A 122-amino-acid chain; its full sequence is Large ribosomal subunit protein uL14 (122 aa).

It belongs to the universal ribosomal protein uL14 family. As to quaternary structure, part of the 50S ribosomal subunit. Forms a cluster with proteins L3 and L19. In the 70S ribosome, L14 and L19 interact and together make contacts with the 16S rRNA in bridges B5 and B8.

Functionally, binds to 23S rRNA. Forms part of two intersubunit bridges in the 70S ribosome. This Roseiflexus castenholzii (strain DSM 13941 / HLO8) protein is Large ribosomal subunit protein uL14.